The following is a 501-amino-acid chain: Glycerol kinase (501 aa).

Thr-14 is a binding site for ADP. Positions 14, 15, and 16 each coordinate ATP. Thr-14 lines the sn-glycerol 3-phosphate pocket. Arg-18 provides a ligand contact to ADP. Residues Arg-84, Glu-85, Tyr-136, and Asp-246 each coordinate sn-glycerol 3-phosphate. Glycerol is bound by residues Arg-84, Glu-85, Tyr-136, Asp-246, and Gln-247. Residues Thr-268 and Gly-311 each contribute to the ADP site. Thr-268, Gly-311, Gln-315, and Gly-412 together coordinate ATP. ADP contacts are provided by Gly-412 and Asn-416.

The protein belongs to the FGGY kinase family. Homotetramer and homodimer (in equilibrium).

It carries out the reaction glycerol + ATP = sn-glycerol 3-phosphate + ADP + H(+). The protein operates within polyol metabolism; glycerol degradation via glycerol kinase pathway; sn-glycerol 3-phosphate from glycerol: step 1/1. Activated by phosphorylation and inhibited by fructose 1,6-bisphosphate (FBP). Functionally, key enzyme in the regulation of glycerol uptake and metabolism. Catalyzes the phosphorylation of glycerol to yield sn-glycerol 3-phosphate. This is Glycerol kinase from Desulforamulus reducens (strain ATCC BAA-1160 / DSM 100696 / MI-1) (Desulfotomaculum reducens).